Reading from the N-terminus, the 413-residue chain is NAD(P)H oxidoreductase RTN4IP1, mitochondrial (413 aa).

A mitochondrion-targeting transit peptide spans 1–23; sequence MTAAGFNSILCLRQLVRLNRRQY. Residues 27 to 52 are disordered; sequence AKSVLSGSQTNDQATPPPTSKSADKM. The segment covering 31-40 has biased composition (polar residues); sequence LSGSQTNDQA. Residues 61–405 form the Enoyl reductase (ER) domain; sequence GDIDELQLSE…SGHLRGKIVV (345 aa). NADPH contacts are provided by Ser-228, Gly-230, Val-231, Ser-251, Tyr-269, Gly-353, Phe-355, His-398, and Arg-400.

The protein belongs to the zinc-containing alcohol dehydrogenase family. Quinone oxidoreductase subfamily.

It localises to the mitochondrion matrix. It catalyses the reaction a quinone + NADH + H(+) = a quinol + NAD(+). It carries out the reaction a quinone + NADPH + H(+) = a quinol + NADP(+). The protein operates within cofactor biosynthesis; ubiquinone biosynthesis. Functionally, NAD(P)H oxidoreductase. Involved in the ubiquinone biosynthetic pathway. The chain is NAD(P)H oxidoreductase RTN4IP1, mitochondrial from Drosophila melanogaster (Fruit fly).